Reading from the N-terminus, the 559-residue chain is Formate--tetrahydrofolate ligase (559 aa).

68-75 is an ATP binding site; sequence TPAGEGKS.

It belongs to the formate--tetrahydrofolate ligase family.

The catalysed reaction is (6S)-5,6,7,8-tetrahydrofolate + formate + ATP = (6R)-10-formyltetrahydrofolate + ADP + phosphate. The protein operates within one-carbon metabolism; tetrahydrofolate interconversion. The polypeptide is Formate--tetrahydrofolate ligase (Bacillus licheniformis (strain ATCC 14580 / DSM 13 / JCM 2505 / CCUG 7422 / NBRC 12200 / NCIMB 9375 / NCTC 10341 / NRRL NRS-1264 / Gibson 46)).